The following is a 157-amino-acid chain: Large ribosomal subunit protein eL21 (157 aa).

Positions 110–132 (QANDQAKAEGNKAGKRVSTKRNP) are disordered.

The protein belongs to the eukaryotic ribosomal protein eL21 family.

The polypeptide is Large ribosomal subunit protein eL21 (RPL21) (Tetrahymena thermophila (strain SB210)).